Reading from the N-terminus, the 357-residue chain is Alanine racemase (357 aa).

The Proton acceptor; specific for D-alanine role is filled by Lys35. Lys35 carries the N6-(pyridoxal phosphate)lysine modification. Arg128 lines the substrate pocket. The active-site Proton acceptor; specific for L-alanine is Tyr254. Substrate is bound at residue Met302.

The protein belongs to the alanine racemase family. The cofactor is pyridoxal 5'-phosphate.

It catalyses the reaction L-alanine = D-alanine. The protein operates within amino-acid biosynthesis; D-alanine biosynthesis; D-alanine from L-alanine: step 1/1. Its function is as follows. Catalyzes the interconversion of L-alanine and D-alanine. May also act on other amino acids. This Marinobacter nauticus (strain ATCC 700491 / DSM 11845 / VT8) (Marinobacter aquaeolei) protein is Alanine racemase (alr).